The following is a 291-amino-acid chain: Heterogeneous nuclear ribonucleoprotein D-like-B (291 aa).

2 RRM domains span residues 34 to 116 (SKMF…QGKE) and 119 to 196 (KKVF…AAQP). The segment at 196-226 (PKEVYRQQQQKQQKGGRGGTRGRGRGQGYSN) is disordered. The span at 210 to 222 (GGRGGTRGRGRGQ) shows a compositional bias: gly residues.

Its subcellular location is the nucleus. The protein resides in the cytoplasm. Its function is as follows. Acts as a transcriptional regulator. Binds DNA and RNA. This chain is Heterogeneous nuclear ribonucleoprotein D-like-B (hnrnpdl-b), found in Xenopus laevis (African clawed frog).